Consider the following 150-residue polypeptide: Ribosome maturation factor RimP (150 aa).

Belongs to the RimP family.

It localises to the cytoplasm. Functionally, required for maturation of 30S ribosomal subunits. The protein is Ribosome maturation factor RimP of Thermotoga maritima (strain ATCC 43589 / DSM 3109 / JCM 10099 / NBRC 100826 / MSB8).